We begin with the raw amino-acid sequence, 171 residues long: Dual-action ribosomal maturation protein DarP (171 aa).

Residues 1–30 are disordered; sequence MPKRPAENPEQSDDFVSKSQKKREMAERQE.

Belongs to the DarP family.

It is found in the cytoplasm. Functionally, member of a network of 50S ribosomal subunit biogenesis factors which assembles along the 30S-50S interface, preventing incorrect 23S rRNA structures from forming. Promotes peptidyl transferase center (PTC) maturation. The protein is Dual-action ribosomal maturation protein DarP of Idiomarina loihiensis (strain ATCC BAA-735 / DSM 15497 / L2-TR).